The chain runs to 86 residues: UPF0297 protein SAHV_1604 (86 aa).

Belongs to the UPF0297 family.

The sequence is that of UPF0297 protein SAHV_1604 from Staphylococcus aureus (strain Mu3 / ATCC 700698).